Reading from the N-terminus, the 405-residue chain is Argininosuccinate synthase (405 aa).

ATP is bound by residues 10–18 (AYSGGLDTS) and Ala-37. Positions 88 and 93 each coordinate L-citrulline. Gly-118 is a binding site for ATP. L-aspartate is bound by residues Thr-120, Asn-124, and Asp-125. Asn-124 provides a ligand contact to L-citrulline. Residues Arg-128, Ser-179, Ser-188, Glu-264, and Tyr-276 each coordinate L-citrulline.

This sequence belongs to the argininosuccinate synthase family. Type 1 subfamily. Homotetramer.

The protein resides in the cytoplasm. The catalysed reaction is L-citrulline + L-aspartate + ATP = 2-(N(omega)-L-arginino)succinate + AMP + diphosphate + H(+). It participates in amino-acid biosynthesis; L-arginine biosynthesis; L-arginine from L-ornithine and carbamoyl phosphate: step 2/3. The chain is Argininosuccinate synthase from Stutzerimonas stutzeri (strain A1501) (Pseudomonas stutzeri).